A 223-amino-acid chain; its full sequence is Ribose-5-phosphate isomerase A (223 aa).

Substrate-binding positions include 32 to 35 (TGST), 85 to 88 (DGAD), and 98 to 101 (KGGG). Glu107 serves as the catalytic Proton acceptor. Lys125 contacts substrate.

This sequence belongs to the ribose 5-phosphate isomerase family. Homodimer.

The catalysed reaction is aldehydo-D-ribose 5-phosphate = D-ribulose 5-phosphate. The protein operates within carbohydrate degradation; pentose phosphate pathway; D-ribose 5-phosphate from D-ribulose 5-phosphate (non-oxidative stage): step 1/1. In terms of biological role, catalyzes the reversible conversion of ribose-5-phosphate to ribulose 5-phosphate. In Marinomonas sp. (strain MWYL1), this protein is Ribose-5-phosphate isomerase A.